The sequence spans 444 residues: Tol-Pal system protein TolB (444 aa).

The N-terminal stretch at 1-19 (MRNIIYFILSLLFSVTSYA) is a signal peptide.

Belongs to the TolB family. In terms of assembly, the Tol-Pal system is composed of five core proteins: the inner membrane proteins TolA, TolQ and TolR, the periplasmic protein TolB and the outer membrane protein Pal. They form a network linking the inner and outer membranes and the peptidoglycan layer.

The protein localises to the periplasm. Functionally, part of the Tol-Pal system, which plays a role in outer membrane invagination during cell division and is important for maintaining outer membrane integrity. This is Tol-Pal system protein TolB from Rickettsia conorii (strain ATCC VR-613 / Malish 7).